The chain runs to 218 residues: ATP phosphoribosyltransferase (218 aa).

It belongs to the ATP phosphoribosyltransferase family. Short subfamily. As to quaternary structure, heteromultimer composed of HisG and HisZ subunits.

It is found in the cytoplasm. The catalysed reaction is 1-(5-phospho-beta-D-ribosyl)-ATP + diphosphate = 5-phospho-alpha-D-ribose 1-diphosphate + ATP. It participates in amino-acid biosynthesis; L-histidine biosynthesis; L-histidine from 5-phospho-alpha-D-ribose 1-diphosphate: step 1/9. Catalyzes the condensation of ATP and 5-phosphoribose 1-diphosphate to form N'-(5'-phosphoribosyl)-ATP (PR-ATP). Has a crucial role in the pathway because the rate of histidine biosynthesis seems to be controlled primarily by regulation of HisG enzymatic activity. This Acaryochloris marina (strain MBIC 11017) protein is ATP phosphoribosyltransferase.